Reading from the N-terminus, the 510-residue chain is Putative folylpolyglutamate synthase (510 aa).

Residue 98 to 101 coordinates ATP; sequence GKGS. Mg(2+) contacts are provided by S122, E189, and H217. Residues R342 and D357 each contribute to the ATP site.

It belongs to the folylpolyglutamate synthase family. A monovalent cation is required as a cofactor.

It is found in the mitochondrion inner membrane. The protein resides in the mitochondrion matrix. It localises to the cytoplasm. It catalyses the reaction (6S)-5,6,7,8-tetrahydrofolyl-(gamma-L-Glu)(n) + L-glutamate + ATP = (6S)-5,6,7,8-tetrahydrofolyl-(gamma-L-Glu)(n+1) + ADP + phosphate + H(+). Its pathway is cofactor biosynthesis; tetrahydrofolylpolyglutamate biosynthesis. Its function is as follows. Catalyzes conversion of folates to polyglutamate derivatives allowing concentration of folate compounds in the cell and the intracellular retention of these cofactors, which are important substrates for most of the folate-dependent enzymes that are involved in one-carbon transfer reactions involved in purine, pyrimidine and amino acid synthesis. In Caenorhabditis elegans, this protein is Putative folylpolyglutamate synthase.